We begin with the raw amino-acid sequence, 375 residues long: Growth/differentiation factor 8 (375 aa).

The N-terminal stretch at 1 to 23 (MQKLQLCVYIYLFMLIVAGPVDL) is a signal peptide. The propeptide occupies 24 to 266 (NENSEQKENV…VTDTPKRSRR (243 aa)). Asparagine 71 carries N-linked (GlcNAc...) asparagine glycosylation. 4 disulfide bridges follow: cysteine 272–cysteine 282, cysteine 281–cysteine 340, cysteine 309–cysteine 372, and cysteine 313–cysteine 374.

The protein belongs to the TGF-beta family. In terms of assembly, homodimer; disulfide-linked. Interacts with WFIKKN2, leading to inhibit its activity. Interacts with FST3. In terms of processing, synthesized as large precursor molecule that undergoes proteolytic cleavage to generate an N-terminal propeptide and a disulfide linked C-terminal dimer, which is the biologically active molecule. The circulating form consists of a latent complex of the C-terminal dimer and other proteins, including its propeptide, which maintain the C-terminal dimer in a latent, inactive state. Ligand activation requires additional cleavage of the prodomain by a tolloid-like metalloproteinase.

The protein resides in the secreted. Functionally, acts specifically as a negative regulator of skeletal muscle growth. This chain is Growth/differentiation factor 8 (MSTN), found in Homo sapiens (Human).